A 764-amino-acid chain; its full sequence is 5-methyltetrahydropteroyltriglutamate--homocysteine methyltransferase (764 aa).

5-methyltetrahydropteroyltri-L-glutamate-binding positions include 16–19 and lysine 121; that span reads RELK. L-homocysteine contacts are provided by residues 440-442 and glutamate 493; that span reads IGS. L-methionine contacts are provided by residues 440 to 442 and glutamate 493; that span reads IGS. 5-methyltetrahydropteroyltri-L-glutamate is bound by residues 524–525 and tryptophan 570; that span reads RC. Aspartate 608 is an L-homocysteine binding site. Position 608 (aspartate 608) interacts with L-methionine. Position 614 (glutamate 614) interacts with 5-methyltetrahydropteroyltri-L-glutamate. 3 residues coordinate Zn(2+): histidine 650, cysteine 652, and glutamate 674. Histidine 703 functions as the Proton donor in the catalytic mechanism. Cysteine 735 contributes to the Zn(2+) binding site.

This sequence belongs to the vitamin-B12 independent methionine synthase family. It depends on Zn(2+) as a cofactor.

It catalyses the reaction 5-methyltetrahydropteroyltri-L-glutamate + L-homocysteine = tetrahydropteroyltri-L-glutamate + L-methionine. The protein operates within amino-acid biosynthesis; L-methionine biosynthesis via de novo pathway; L-methionine from L-homocysteine (MetE route): step 1/1. Its function is as follows. Catalyzes the transfer of a methyl group from 5-methyltetrahydrofolate to homocysteine resulting in methionine formation. In Burkholderia cenocepacia (strain ATCC BAA-245 / DSM 16553 / LMG 16656 / NCTC 13227 / J2315 / CF5610) (Burkholderia cepacia (strain J2315)), this protein is 5-methyltetrahydropteroyltriglutamate--homocysteine methyltransferase.